The primary structure comprises 552 residues: Protein FAM234A (552 aa).

The Cytoplasmic portion of the chain corresponds to 1–48 (MTDGKDLEAEIHPLKSENRKVPENAGALAGKEPRGTPAPQTRLSHCRT). Residues 49-69 (AAFFLSLFACLLVVFVVSFII) traverse the membrane as a helical; Signal-anchor for type II membrane protein segment. Over 70–552 (PCPDRPALQG…LSRLRYRSEA (483 aa)) the chain is Extracellular. Residues N115, N238, and N473 are each glycosylated (N-linked (GlcNAc...) asparagine).

This sequence belongs to the FAM234 family.

The protein resides in the membrane. The protein is Protein FAM234A (FAM234A) of Bos taurus (Bovine).